The chain runs to 200 residues: MDVTTDAGAPWLVAGLGNPGPEYASNRHNVGFMVADLLAERIGARFKRHGKAQAQVVEGRIGPPGPANRRVILAKPMSFMNVSGGPVTALRDFYKVPVGNIVAVHDELDIDYGVLRLKLGGGDNGHNGLKSITKSLGADYHRVRFGIGRPPGRMPVADFVLRDFSSTERKELDYFVDRAADAVEALVIEGLERAQSAYNS.

Residue Tyr-23 participates in tRNA binding. The active-site Proton acceptor is the His-28. Positions 79, 81, and 127 each coordinate tRNA.

The protein belongs to the PTH family. Monomer.

The protein resides in the cytoplasm. It catalyses the reaction an N-acyl-L-alpha-aminoacyl-tRNA + H2O = an N-acyl-L-amino acid + a tRNA + H(+). Hydrolyzes ribosome-free peptidyl-tRNAs (with 1 or more amino acids incorporated), which drop off the ribosome during protein synthesis, or as a result of ribosome stalling. In terms of biological role, catalyzes the release of premature peptidyl moieties from peptidyl-tRNA molecules trapped in stalled 50S ribosomal subunits, and thus maintains levels of free tRNAs and 50S ribosomes. The chain is Peptidyl-tRNA hydrolase from Streptomyces coelicolor (strain ATCC BAA-471 / A3(2) / M145).